Here is a 1469-residue protein sequence, read N- to C-terminus: MAAGGGGGSSKASSSSASSAGALESSLDRKFQSVTNTMESIQGLSSWCIENKKHHSTIVYHWMKWLRRSTYPHRLNLFYLANDVIQNCKRKNAIIFRESFADVLPEAAALVKDPSVSKSIERIFKIWEDRNVYPEDMIVALREALMDRAASHNARLQKLQCFPGTTFKTQKQLKENLNKQPNKQWKKSQTSTNPKAALKSKIVAEFRSQALIEELLMYKRSEDQIELKEKQLSTMRVDVCSTETLKCLKDKTGGKKFSKEFEEASSKLEEFVNGLDKQVKNGPSLTEALENAGIFYEAQYKEVKVVANAYKTFANRVNNLKKKLDQLKSTLPDPEESPVPSPSMDAPSPTGSESPFQGMGGEEPQSPAMESDKSATPEPVTDNRDVEDMELSDVEDDGSKIIVEDRKEKPVEKPAVSTGVPTKSTESVSKASPCAPPSVPTTAAPPLPKPLSTALLSPSPTLVLPNLANVDLAKISSILSSLTSVMKNTGVSSASRPSPGIPTSPSNLSSGLKTPAPATTPSHNPLANILSKVEITPESILSALSKTQTQSAPALQGLSSLLQSVTANPVPASEVTSQSTTASPASTTGSAVKGRNLLSSTQSFIPKSFNYSPSSSTSEVSSTSASKASVGQSPVLPSTTFKLPSSSLGFTGTHNPSPAAPPTEVAVCQSSEVSKPKPESESTSPSLEMKIHNFLKGNPGFSGLNLNIPILSSLGSSAPSEGHASDFQRGPTSTSVDSIDGTPVRDERSGTPTQDEMMDKPTSSSVDTMSLLSKIISPGSSTPSSTRSPPPGRDESYPQELPNSVSTYRPFGLGSDSPYKQPSGGVERPSSLMDSSQEKLFPDTSFQEDEDYRDFEYSGPPPSAMMNLEKKPAKSILKSSKLSDATEYQPILSSYNHRAQEFGVKSAFPPSVRALLDSSENCDRLSSPPGLFGAFNIRGNEPGSERSPSPSKNDAFFTPDSNHSGLSQSTAGHLTLPQTQYPDSPHSVPHRSIFSSQSTLAAPAGHPPTSGVEKVLASTISTTSTIEFKNMLKNASRKPSDDKHFGQTPNKGTSSDGVSLSNLTQPSLPTTDQQQEEHYRIETRVSSSCLDLPDSTEEKGAPIETLGYHNAANRRMSGEPIKTVESIRVPGKGNRGHGREVSRVGWFDLSTPGSSFDNGPSSASELASLGGGGSGGLTGFKTTPYKERAPQFQESVTSFRSNSFNSTFEHHLPPSPLEHGAPFQREPVGPSSAPPAPPKDHGGIFSREAPTHLPSVDLSNPFTKEASLAHAGPPPPPGEHSGVPFPPPPPPPPPGELSSGGTGVPFATPAPPPPPVDHSGVVPFPTPPLPEHGVTGAVSVFPKDHSSLLQGTMAEHFGVLTGPRDLNGPGLNRSRESLSLPSHPLEHLGPALGGGGGGNTSSSGLPLSPAHRDAIGRSGMILRSPRPDFRPREAFLGRDPFHSLKRPRPPFVRGPPFFAPKRPFFPPRY.

The residue at position 2 (Ala2) is an N-acetylalanine. Ser16 carries the post-translational modification Phosphoserine. One can recognise a CID domain in the interval 19–149 (SAGALESSLD…ALREALMDRA (131 aa)). Disordered regions lie at residues 329–445 (STLP…TAAP) and 489–524 (TGVS…PSHN). The span at 370 to 386 (ESDKSATPEPVTDNRDV) shows a compositional bias: basic and acidic residues. Residue Ser374 is modified to Phosphoserine. Residue Thr376 is modified to Phosphothreonine. A compositionally biased stretch (acidic residues) spans 387-396 (EDMELSDVED). Residue Ser392 is modified to Phosphoserine. The segment covering 397-412 (DGSKIIVEDRKEKPVE) has biased composition (basic and acidic residues). The segment covering 419 to 430 (GVPTKSTESVSK) has biased composition (polar residues). A compositionally biased stretch (pro residues) spans 434 to 445 (CAPPSVPTTAAP). 4 positions are modified to phosphoserine: Ser492, Ser495, Ser498, and Ser504. Thr536 is subject to Phosphothreonine. The interval 572–594 (ASEVTSQSTTASPASTTGSAVKG) is disordered. The segment covering 576–591 (TSQSTTASPASTTGSA) has biased composition (low complexity). Ser583 and Ser612 each carry phosphoserine. Thr617 carries the phosphothreonine modification. Ser633 carries the post-translational modification Phosphoserine. Positions 647 to 656 (SLGFTGTHNP) are enriched in polar residues. 7 disordered regions span residues 647 to 686 (SLGF…TSPS), 716 to 867 (SSAP…AMMN), 919 to 1013 (SENC…SGVE), 1033 to 1140 (KNAS…HGRE), 1154 to 1183 (SSFD…FKTT), 1204 to 1328 (FNST…PTPP), and 1368 to 1414 (GPGL…HRDA). 4 positions are modified to phosphoserine: Ser682, Ser684, Ser735, and Ser738. Thr742 is modified (phosphothreonine). Ser749 is modified (phosphoserine). The residue at position 751 (Thr751) is a Phosphothreonine. Polar residues predominate over residues 761 to 771 (PTSSSVDTMSL). Residues Ser777 and Ser781 each carry the phosphoserine modification. A compositionally biased stretch (low complexity) spans 777–787 (SPGSSTPSSTR). Thr782 carries the phosphothreonine modification. 5 positions are modified to phosphoserine: Ser788, Ser836, Ser845, Ser919, and Ser947. Over residues 959-982 (PDSNHSGLSQSTAGHLTLPQTQYP) the composition is skewed to polar residues. Phosphoserine occurs at positions 984 and 995. The segment covering 1047–1073 (QTPNKGTSSDGVSLSNLTQPSLPTTDQ) has biased composition (polar residues). Phosphoserine occurs at positions 1086 and 1117. The segment covering 1159-1168 (GPSSASELAS) has biased composition (low complexity). Residues 1169 to 1178 (LGGGGSGGLT) are compositionally biased toward gly residues. The span at 1272 to 1295 (GPPPPPGEHSGVPFPPPPPPPPPG) shows a compositional bias: pro residues. At Arg1375 the chain carries Asymmetric dimethylarginine. Low complexity-rich tracts occupy residues 1377–1390 (SLSL…HLGP) and 1400–1409 (TSSSGLPLSP). Arg1432 and Arg1438 each carry asymmetric dimethylarginine.

Associates with the RNA polymerase II complex.

This is Regulation of nuclear pre-mRNA domain-containing protein 2 (Rprd2) from Mus musculus (Mouse).